We begin with the raw amino-acid sequence, 228 residues long: uncharacterized protein (228 aa).

This sequence belongs to the HAD-like hydrolase superfamily.

It is found in the cytoplasm. It localises to the nucleus. This is an uncharacterized protein from Schizosaccharomyces pombe (strain 972 / ATCC 24843) (Fission yeast).